We begin with the raw amino-acid sequence, 475 residues long: Homeobox even-skipped homolog protein 2 (475 aa).

Disordered stretches follow at residues 82–113 (PSSE…AEAD) and 155–189 (TSAS…SGAD). The span at 83–96 (SSESTVSSEIASAT) shows a compositional bias: low complexity. Gly residues predominate over residues 160–186 (SGLGSLHGGGGGGNSGAAALGGSGSGS). The segment at residues 191–250 (VRRYRTAFTREQIARLEKEFYRENYVSRPRRCELAAALNLPETTIKVWFQNRRMKDKRQR) is a DNA-binding region (homeobox).

It belongs to the even-skipped homeobox family.

It localises to the nucleus. The sequence is that of Homeobox even-skipped homolog protein 2 (Evx2) from Mus musculus (Mouse).